Reading from the N-terminus, the 102-residue chain is Small ribosomal subunit protein uS10 (102 aa).

Belongs to the universal ribosomal protein uS10 family. In terms of assembly, part of the 30S ribosomal subunit.

Functionally, involved in the binding of tRNA to the ribosomes. This is Small ribosomal subunit protein uS10 from Methanosarcina mazei (strain ATCC BAA-159 / DSM 3647 / Goe1 / Go1 / JCM 11833 / OCM 88) (Methanosarcina frisia).